Here is a 148-residue protein sequence, read N- to C-terminus: uncharacterized protein (148 aa).

Residues M1–F21 form a helical membrane-spanning segment. The disordered stretch occupies residues A27–T61.

The protein localises to the host membrane. This is an uncharacterized protein from Frog virus 3 (isolate Goorha) (FV-3).